Here is a 362-residue protein sequence, read N- to C-terminus: Stress response regulator protein 1 (362 aa).

Disordered stretches follow at residues 1 to 39 and 163 to 188; these read MTRL…SLVQ and TLKS…ETKT. Positions 19-39 are enriched in low complexity; it reads PSQLLHSASLSSSPSSPSLVQ. Residues 209–327 form the Response regulatory domain; it reads KFLLVDDNLI…LDFMANVIDE (119 aa). The residue at position 260 (aspartate 260) is a 4-aspartylphosphate.

In terms of biological role, required for stress adaptation, morphogenesis and virulence. In Lodderomyces elongisporus (strain ATCC 11503 / CBS 2605 / JCM 1781 / NBRC 1676 / NRRL YB-4239) (Yeast), this protein is Stress response regulator protein 1 (SRR1).